A 266-amino-acid chain; its full sequence is Short-chain dehydrogenase/reductase tropE (266 aa).

NADP(+)-binding residues include L18, D69, and N96. The Proton donor role is filled by S147. Residues Y181, K185, and T216 each contribute to the NADP(+) site. Y181 serves as the catalytic Proton acceptor. K185 serves as the catalytic Lowers pKa of active site Tyr.

This sequence belongs to the short-chain dehydrogenases/reductases (SDR) family.

It participates in secondary metabolite biosynthesis. Functionally, short-chain dehydrogenase/reductase; part of the gene cluster that mediates the biosynthesis of the tropolone class of fungal maleic anhydrides. The pathway begins with the synthesis of 3-methylorcinaldehyde by the non-reducing polyketide synthase (PKS) tropA. 3-methylorcinaldehyde is the substrate for the FAD-dependent monooxygenase tropB to yield a dearomatized hydroxycyclohexadione. The 2-oxoglutarate-dependent dioxygenase tropC then performs the oxidative ring expansion to provide the first tropolone metabolite stipitaldehyde. Trop D converts stipitaldehyde into stipitacetal which is in turn converted to stipitalide by the short-chain dehydrogenase/reductase tropE. The next steps involve tropF, tropG, tropH, tropI and tropJ to form successive tropolone maleic anhydrides including stipitaldehydic, stipitatonic and stipitatic acids. The sequence is that of Short-chain dehydrogenase/reductase tropE from Talaromyces stipitatus (strain ATCC 10500 / CBS 375.48 / QM 6759 / NRRL 1006) (Penicillium stipitatum).